A 751-amino-acid chain; its full sequence is Nucleoporin NUP37 (751 aa).

Residues 21 to 65 (SLGRRIYDVKTYPVQSPQGATILIYGHENGATVVWRGGRRLKPPK) form a WD 1 repeat. The interval 57–77 (GGRRLKPPKPQTNEKRNGTKP) is disordered. Residues 68–77 (TNEKRNGTKP) show a composition bias toward basic and acidic residues. WD repeat units lie at residues 162-209 (TNDV…LTGP), 237-271 (AQAA…KPGT), 282-322 (YLPS…LPSD), and 351-390 (TSRK…PTAA). The tract at residues 419-443 (EGTSPLRNPTTQKASSSSSGEFVPM) is disordered. Over residues 423-438 (PLRNPTTQKASSSSSG) the composition is skewed to polar residues. 2 WD repeats span residues 455-492 (AFGG…VLFL) and 494-534 (GADP…RMIR). The interval 671 to 692 (IPSTDAGDEETIPATSAPSSQQ) is disordered. Residues 683–692 (PATSAPSSQQ) show a composition bias toward polar residues. A coiled-coil region spans residues 716 to 750 (RDVEQELLDIMEIDRELEQLEQARERGRKRVFFEE).

As to quaternary structure, the nuclear pore complex (NPC) constitutes the exclusive means of nucleocytoplasmic transport. NPCs allow the passive diffusion of ions and small molecules and the active, nuclear transport receptor-mediated bidirectional transport of macromolecules such as proteins, RNAs, ribonucleoparticles (RNPs), and ribosomal subunits across the nuclear envelope. The 55-60 MDa NPC is composed of at least 28 different subunits: AMO1, ELYS, GLE1, GLE2, MLP1, NDC1, NIC96, NSP1, NUP133, NUP145, NUP152, NUP159, NUP170, NUP188, NUP192, NUP37, NUP49, NUP53, NUP56, NUP57, NUP82, NUP84, NUP85, POM152, POM33, POM34, SEC13 and SEH1. Due to its 8-fold rotational symmetry, all subunits are present with 8 copies or multiples thereof.

It is found in the nucleus. Its subcellular location is the nuclear pore complex. The sequence is that of Nucleoporin NUP37 (NUP37) from Chaetomium thermophilum (strain DSM 1495 / CBS 144.50 / IMI 039719) (Thermochaetoides thermophila).